We begin with the raw amino-acid sequence, 129 residues long: D-ribose pyranase (129 aa).

Histidine 20 acts as the Proton donor in catalysis. Substrate is bound by residues aspartate 28, histidine 96, and 118-120 (YAN).

It belongs to the RbsD / FucU family. RbsD subfamily. In terms of assembly, homodecamer.

Its subcellular location is the cytoplasm. The enzyme catalyses beta-D-ribopyranose = beta-D-ribofuranose. It functions in the pathway carbohydrate metabolism; D-ribose degradation; D-ribose 5-phosphate from beta-D-ribopyranose: step 1/2. In terms of biological role, catalyzes the interconversion of beta-pyran and beta-furan forms of D-ribose. The chain is D-ribose pyranase from Streptomyces avermitilis (strain ATCC 31267 / DSM 46492 / JCM 5070 / NBRC 14893 / NCIMB 12804 / NRRL 8165 / MA-4680).